A 156-amino-acid polypeptide reads, in one-letter code: MNVIEGVVAAPDARVAIAIARFNHFINDSLLNGAVDALKRIGQVKDENITVVWVPGAYELPLAVSALADSKNYDAVVALGTVIRGGTAHFEFVAGECSSGLSAVAARAALPVAFGVLTTESIEQAIERAGTKAGNKGAEAALTALEMIKVLQAIKA.

5-amino-6-(D-ribitylamino)uracil is bound by residues Phe-22, 57 to 59 (AYE), and 81 to 83 (TVI). 86–87 (GT) lines the (2S)-2-hydroxy-3-oxobutyl phosphate pocket. Residue His-89 is the Proton donor of the active site. Phe-114 contributes to the 5-amino-6-(D-ribitylamino)uracil binding site. Position 128 (Arg-128) interacts with (2S)-2-hydroxy-3-oxobutyl phosphate.

It belongs to the DMRL synthase family. In terms of assembly, forms an icosahedral capsid composed of 60 subunits, arranged as a dodecamer of pentamers.

The catalysed reaction is (2S)-2-hydroxy-3-oxobutyl phosphate + 5-amino-6-(D-ribitylamino)uracil = 6,7-dimethyl-8-(1-D-ribityl)lumazine + phosphate + 2 H2O + H(+). The protein operates within cofactor biosynthesis; riboflavin biosynthesis; riboflavin from 2-hydroxy-3-oxobutyl phosphate and 5-amino-6-(D-ribitylamino)uracil: step 1/2. Catalyzes the formation of 6,7-dimethyl-8-ribityllumazine by condensation of 5-amino-6-(D-ribitylamino)uracil with 3,4-dihydroxy-2-butanone 4-phosphate. This is the penultimate step in the biosynthesis of riboflavin. The sequence is that of 6,7-dimethyl-8-ribityllumazine synthase from Sodalis glossinidius (strain morsitans).